We begin with the raw amino-acid sequence, 211 residues long: Transcription factor ces-2 (211 aa).

A compositionally biased stretch (low complexity) spans 83 to 101; sequence VSSRSSTVSSSHFSSPQRS. Disordered stretches follow at residues 83–152 and 184–211; these read VSSR…HALE and NSEVSCESNDSTETNDSNDSKSDSTIEV. The segment covering 111-152 has biased composition (basic and acidic residues); sequence PEEKKDSAYFERRRKNNDAAKRSRDARRQKEEQIASKAHALE. The bZIP domain occupies 116 to 179; that stretch reads DSAYFERRRK…AQLRFLLFSK (64 aa). Residues 122–140 are basic motif; sequence RRRKNNDAAKRSRDARRQK. Residues 144–172 form a leucine-zipper region; it reads IASKAHALERENMQLRGKVSSLEQEAAQL. Low complexity predominate over residues 190–200; the sequence is ESNDSTETNDS. The segment covering 201 to 211 has biased composition (basic and acidic residues); it reads NDSKSDSTIEV.

This sequence belongs to the bZIP family. Interacts with NFIL3 transcription factor homolog atf-2.

The protein resides in the nucleus. In terms of biological role, transcription factor. Required to activate programmed cell death in the sister cells of the serotoninergic neurosecretory motor (NSM) neurons. Negatively regulates the activity of ces-1 which in turn negatively regulates the activities of cell-killing genes. Binds to the DNA sequence 5'-RTTACGTAAY-3'. Involved in the development of the excretory duct cell, by positively modulating embryonic transcription of putative transcription factor lin-48, acting in concert with NFIL3 transcription factor homolog atf-2. Positively modulates expression of neuropeptide pigment dispersing factor homologs pdf-1 and pdf-2. This chain is Transcription factor ces-2 (ces-2), found in Caenorhabditis elegans.